The chain runs to 175 residues: Cell division protein SepF (175 aa).

A compositionally biased stretch (acidic residues) spans 20 to 29 (RYEDYDDYDD). Positions 20 to 88 (RYEDYDDYDD…ERPTPPLRVT (69 aa)) are disordered. Composition is skewed to basic and acidic residues over residues 30 to 47 (AEPH…DLGS) and 54 to 73 (RRMD…RRVS).

This sequence belongs to the SepF family. As to quaternary structure, homodimer. Interacts with FtsZ.

The protein localises to the cytoplasm. In terms of biological role, cell division protein that is part of the divisome complex and is recruited early to the Z-ring. Probably stimulates Z-ring formation, perhaps through the cross-linking of FtsZ protofilaments. Its function overlaps with FtsA. In Acidothermus cellulolyticus (strain ATCC 43068 / DSM 8971 / 11B), this protein is Cell division protein SepF.